The chain runs to 1813 residues: Sucrase-isomaltase, intestinal (1813 aa).

Topologically, residues 1-12 (MARKKSSGLKIT) are cytoplasmic. Ser7 carries the post-translational modification Phosphoserine; by PKA. The chain crosses the membrane as a helical; Signal-anchor for type II membrane protein span at residues 13-32 (LIVLLAIVTIIAIALVAILP). At 33–1813 (TKTPAVELVS…LDEPIEISWT (1781 aa)) the chain is on the lumenal side. The P-type 1 domain occupies 46–95 (GKCPSAENDRLDEKINCIPDQFPTQALCAMQGCCWNPRNESPTPWCSFAN). Intrachain disulfides connect Cys48–Cys79, Cys62–Cys78, and Cys73–Cys91. The tract at residues 95 to 991 (NNHGYEFEKI…DLELNTATAR (897 aa)) is isomaltase. N-linked (GlcNAc...) asparagine glycosylation is present at Asn127. Substrate is bound by residues Asp250 and Asp374. Tyr377 bears the Sulfotyrosine mark. A glycan (N-linked (GlcNAc...) asparagine) is linked at Asn388. Asp491 functions as the Nucleophile; for isomaltase activity in the catalytic mechanism. A disulfide bridge links Cys506 with Cys531. A substrate-binding site is contributed by Arg574. The For isomaltase activity role is filled by Asp590. Cys621 and Cys632 are oxidised to a cystine. His648 contributes to the substrate binding site. N-linked (GlcNAc...) asparagine glycosylation is found at Asn669, Asn791, Asn896, and Asn911. A P-type 2 domain is found at 917–962 (NQVSLDSEKIDCFPDNNPENKQNCEERGCLWEPNSAAEGPRCYFPK). The interval 992–1813 (IKMPSNPISV…LDEPIEISWT (822 aa)) is sucrase. N-linked (GlcNAc...) asparagine glycans are attached at residues Asn1221 and Asn1289. Tyr1294 is modified (sulfotyrosine). Residues Asn1326 and Asn1340 are each glycosylated (N-linked (GlcNAc...) asparagine). 2 positions are modified to sulfotyrosine: Tyr1368 and Tyr1371. Residue Asp1380 is the Nucleophile; for sucrase activity of the active site. The active-site For sucrase activity is Glu1383. The N-linked (GlcNAc...) asparagine glycan is linked to Asn1432. Catalysis depends on Asp1486, which acts as the Proton donor; for sucrase activity. N-linked (GlcNAc...) asparagine glycosylation is found at Asn1521, Asn1545, Asn1558, Asn1703, and Asn1772.

The protein belongs to the glycosyl hydrolase 31 family. The resulting sucrase and isomaltase subunits stay associated with one another in a complex by non-covalent linkages. In terms of processing, the precursor is proteolytically cleaved when exposed to pancreatic proteases in the intestinal lumen. Post-translationally, sulfated.

It is found in the apical cell membrane. It catalyses the reaction Hydrolysis of sucrose and maltose by an alpha-D-glucosidase-type action.. It carries out the reaction Hydrolysis of (1-&gt;6)-alpha-D-glucosidic linkages in some oligosaccharides produced from starch and glycogen by alpha-amylase, and in isomaltose.. In terms of biological role, plays an important role in the final stage of carbohydrate digestion. Isomaltase activity is specific for both alpha-1,4- and alpha-1,6-oligosaccharides. The chain is Sucrase-isomaltase, intestinal (SI) from Suncus murinus (Asian house shrew).